A 151-amino-acid polypeptide reads, in one-letter code: Large ribosomal subunit protein bL17 (151 aa).

Residues 118–151 (EAKQPPRKEKAKKPAPVQAEEASATPASEEKAQD) are disordered. The segment covering 131–144 (PAPVQAEEASATPA) has biased composition (low complexity).

It belongs to the bacterial ribosomal protein bL17 family. In terms of assembly, part of the 50S ribosomal subunit. Contacts protein L32.

The sequence is that of Large ribosomal subunit protein bL17 from Syntrophobacter fumaroxidans (strain DSM 10017 / MPOB).